A 128-amino-acid chain; its full sequence is Large ribosomal subunit protein bL17 (128 aa).

It belongs to the bacterial ribosomal protein bL17 family. Part of the 50S ribosomal subunit. Contacts protein L32.

The chain is Large ribosomal subunit protein bL17 from Glaesserella parasuis serovar 5 (strain SH0165) (Haemophilus parasuis).